The sequence spans 153 residues: Pheromone-binding protein Gp-9 (153 aa).

The N-terminal stretch at 1–19 (MKTFVLHIFIFALVAFASA) is a signal peptide. Disulfide bonds link Cys-37–Cys-77, Cys-73–Cys-129, and Cys-118–Cys-138.

This sequence belongs to the PBP/GOBP family. Homodimer.

The protein resides in the secreted. Functionally, colony queen number, a major feature of social organization, is associated with worker genotype for Gp-9. Colonies are headed by either a single reproductive queen (monogyne form) or multiple queens (polygyne form). Differences in worker Gp-9 genotypes between social forms may cause differences in workers' abilities to recognize queens and regulate their numbers. The protein is Pheromone-binding protein Gp-9 of Solenopsis n. sp. (strain JP-2002) (Fire ant).